Reading from the N-terminus, the 376-residue chain is Beta-centractin (376 aa).

Methionine 1 is modified (N-acetylmethionine). Tyrosine 4 carries the post-translational modification 3'-nitrotyrosine.

The protein belongs to the actin family. ARP1 subfamily.

It localises to the cytoplasm. The protein localises to the cytoskeleton. It is found in the microtubule organizing center. Its subcellular location is the centrosome. In terms of biological role, component of a multi-subunit complex involved in microtubule based vesicle motility. It is associated with the centrosome. The polypeptide is Beta-centractin (Actr1b) (Mus musculus (Mouse)).